The chain runs to 474 residues: Bifunctional protein HldE (474 aa).

The segment at 1 to 318 is ribokinase; the sequence is MKVTLPDFNK…ENAIRGRADN (318 aa). 195–198 is a binding site for ATP; sequence NMSE. Residue aspartate 264 is part of the active site. Residues 344 to 474 form a cytidylyltransferase region; it reads MTNGCFDILH…TNIINAIKKK (131 aa).

This sequence in the N-terminal section; belongs to the carbohydrate kinase PfkB family. It in the C-terminal section; belongs to the cytidylyltransferase family. As to quaternary structure, homodimer.

The enzyme catalyses D-glycero-beta-D-manno-heptose 7-phosphate + ATP = D-glycero-beta-D-manno-heptose 1,7-bisphosphate + ADP + H(+). It catalyses the reaction D-glycero-beta-D-manno-heptose 1-phosphate + ATP + H(+) = ADP-D-glycero-beta-D-manno-heptose + diphosphate. It functions in the pathway nucleotide-sugar biosynthesis; ADP-L-glycero-beta-D-manno-heptose biosynthesis; ADP-L-glycero-beta-D-manno-heptose from D-glycero-beta-D-manno-heptose 7-phosphate: step 1/4. It participates in nucleotide-sugar biosynthesis; ADP-L-glycero-beta-D-manno-heptose biosynthesis; ADP-L-glycero-beta-D-manno-heptose from D-glycero-beta-D-manno-heptose 7-phosphate: step 3/4. Its function is as follows. Catalyzes the phosphorylation of D-glycero-D-manno-heptose 7-phosphate at the C-1 position to selectively form D-glycero-beta-D-manno-heptose-1,7-bisphosphate. Catalyzes the ADP transfer from ATP to D-glycero-beta-D-manno-heptose 1-phosphate, yielding ADP-D-glycero-beta-D-manno-heptose. The protein is Bifunctional protein HldE of Proteus mirabilis (strain HI4320).